The following is a 771-amino-acid chain: Protein translocase subunit SecA 2 (771 aa).

ATP-binding positions include glutamine 91, 109–113 (GEGKT), and aspartate 496.

It belongs to the SecA family. Monomer and homodimer. Part of the essential Sec protein translocation apparatus which comprises SecA, SecYEG and auxiliary proteins SecDF. Other proteins may also be involved.

Its subcellular location is the cell membrane. The protein localises to the cytoplasm. It catalyses the reaction ATP + H2O + cellular proteinSide 1 = ADP + phosphate + cellular proteinSide 2.. Functionally, part of the Sec protein translocase complex. Interacts with the SecYEG preprotein conducting channel. Has a central role in coupling the hydrolysis of ATP to the transfer of proteins into and across the cell membrane, serving as an ATP-driven molecular motor driving the stepwise translocation of polypeptide chains across the membrane. The sequence is that of Protein translocase subunit SecA 2 from Corynebacterium jeikeium (strain K411).